The chain runs to 314 residues: DNA-directed RNA polymerase subunit alpha (314 aa).

Residues 1–228 (MIEIEKPKIE…EHLNIFVGLT (228 aa)) form an alpha N-terminal domain (alpha-NTD) region. The alpha C-terminal domain (alpha-CTD) stretch occupies residues 245–314 (KEKVLEMTIE…ELGLGLRKDD (70 aa)).

It belongs to the RNA polymerase alpha chain family. In terms of assembly, homodimer. RNAP is composed of a core of 2 alpha, a beta and a beta' subunit. The core is associated with a delta subunit, and at least one of epsilon or omega. When a sigma factor is associated with the core the holoenzyme is formed, which can initiate transcription.

The catalysed reaction is RNA(n) + a ribonucleoside 5'-triphosphate = RNA(n+1) + diphosphate. In terms of biological role, DNA-dependent RNA polymerase catalyzes the transcription of DNA into RNA using the four ribonucleoside triphosphates as substrates. The polypeptide is DNA-directed RNA polymerase subunit alpha (Bacillus subtilis (strain 168)).